Consider the following 360-residue polypeptide: Leukotriene B4 receptor 2 (360 aa).

Residues 1–24 (MSVCYRPPGNETLLSWKGSRATGT) are Extracellular-facing. A glycan (N-linked (GlcNAc...) asparagine) is linked at Asn-10. A helical membrane pass occupies residues 25 to 45 (AFLLLAALLGLPGNGFVVWSL). Over 46-60 (AGWRPTAGRPLAATL) the chain is Cytoplasmic. A helical transmembrane segment spans residues 61–81 (VLHLALADGAVLLLTPLFVAF). Residues 82–96 (LSQEAWPLGQVGCKA) are Extracellular-facing. The chain crosses the membrane as a helical span at residues 97-117 (VYYVCALSMYASVLLTGLLSL). Residues 118–140 (QRCLAVTRPFLAPRLRSPALARR) lie on the Cytoplasmic side of the membrane. The chain crosses the membrane as a helical span at residues 141-161 (LLLGVWLAALVLAVPAAVYRH). Residues 162-185 (LWGGRVCQLCHPSPVHAAAHLSLE) are Extracellular-facing. The chain crosses the membrane as a helical span at residues 186–206 (TLTAFVLPFGTVLGCYGVTLA). Residues 207–224 (RLRGARWGSGRQGTRVGR) lie on the Cytoplasmic side of the membrane. The chain crosses the membrane as a helical span at residues 225–245 (LVSAIVLAFGLLWAPYHAVNL). The Extracellular portion of the chain corresponds to 246–275 (LQAVAALAPPEGPLARLGGAGQAARAGTTA). The helical transmembrane segment at 276 to 296 (LAFFSSSVNPVLYVFTAGDLL) threads the bilayer. The Cytoplasmic portion of the chain corresponds to 297-360 (PRAGPRFLTR…GKTEKDSQEW (64 aa)). The segment at 311–360 (SGEARGGSRSREGTMELRTTPKLKVMGQGRGNGDPGGGDGGKTEKDSQEW) is disordered. Residues 338-350 (QGRGNGDPGGGDG) are compositionally biased toward gly residues. Over residues 351–360 (GKTEKDSQEW) the composition is skewed to basic and acidic residues.

It belongs to the G-protein coupled receptor 1 family.

The protein localises to the cell membrane. Its function is as follows. Low-affinity receptor for leukotrienes including leukotriene B4. Mediates chemotaxis of granulocytes and macrophages. The response is mediated via G-proteins that activate a phosphatidylinositol-calcium second messenger system. The protein is Leukotriene B4 receptor 2 (Ltb4r2) of Mus musculus (Mouse).